A 317-amino-acid polypeptide reads, in one-letter code: MTTALDQLKQYTTVVADTGDFQQLAQYKPQDATTNPSLILKAVQKDAYKPILEKTVRDHRDESADFIIDRLLIAFGTEILKLIPGRVSTEVDARLSFDTPRSIDKGRELIKLYEDAGIGRERILIKLASTWEGIRAAEVLQKEGIKCNMTLLFSLVQAAASAEAGAQLISPFVGRIYDWYKKQAGADWDEAKNGGANDPGVQSVRRIYTYYKTFGYNTEVMGASFRTTSQITELAGCDLLTISPDLLQKLQDSNDTVERKLSPDALHDKPTERVAIDEASFRFQLNDEAMATEKLAEGIRVFAADAVKLEKLIDSLR.

Residue lysine 126 is the Schiff-base intermediate with substrate of the active site.

This sequence belongs to the transaldolase family. Type 1 subfamily. Homodimer.

It localises to the cytoplasm. It carries out the reaction D-sedoheptulose 7-phosphate + D-glyceraldehyde 3-phosphate = D-erythrose 4-phosphate + beta-D-fructose 6-phosphate. It participates in carbohydrate degradation; pentose phosphate pathway; D-glyceraldehyde 3-phosphate and beta-D-fructose 6-phosphate from D-ribose 5-phosphate and D-xylulose 5-phosphate (non-oxidative stage): step 2/3. Its function is as follows. Transaldolase is important for the balance of metabolites in the pentose-phosphate pathway. This is Transaldolase from Burkholderia ambifaria (strain ATCC BAA-244 / DSM 16087 / CCUG 44356 / LMG 19182 / AMMD) (Burkholderia cepacia (strain AMMD)).